Consider the following 611-residue polypeptide: Serine protease FAM111A (611 aa).

The PIP-box motif lies at 16 to 28 (KCNMKIEHYFSPV). Residue Lys-20 forms a Glycyl lysine isopeptide (Lys-Gly) (interchain with G-Cter in SUMO2) linkage. Position 26 is a phosphoserine (Ser-26). Residues Lys-30 and Lys-65 each participate in a glycyl lysine isopeptide (Lys-Gly) (interchain with G-Cter in SUMO2) cross-link. The interval 44 to 73 (ESRGDPRATTNTQAQRFHSPKKNPEDQTMP) is disordered. Residues 336–611 (KVTKNSSSIK…DVEMMSDEDL (276 aa)) are interaction with SV40 large T antigen. Residues His-385, Asp-439, and Ser-541 each act as charge relay system in the active site.

Belongs to the FAM111 family. As to quaternary structure, interacts (via PIP-box) with PCNA; then interaction is direct. In terms of assembly, (Microbial infection) Interacts with SV40 virus large T antigen and this interaction is required for efficient viral replication and sustained viral gene expression in restrictive cell types. (Microbial infection) Interacts with vaccinia virus protein OPG079; this interaction promotes the degradation of OPG079. Autocatalytically cleaved; activating the protein. Autocatalytic cleavage takes place in trans.

The protein resides in the nucleus. The protein localises to the chromosome. It localises to the cytoplasm. Its function is as follows. Single-stranded DNA-binding serine protease that mediates the proteolytic cleavage of covalent DNA-protein cross-links (DPCs) during DNA synthesis, thereby playing a key role in maintaining genomic integrity. DPCs are highly toxic DNA lesions that interfere with essential chromatin transactions, such as replication and transcription, and which are induced by reactive agents, such as UV light or formaldehyde. Protects replication fork from stalling by removing DPCs, such as covalently trapped topoisomerase 1 (TOP1) adducts on DNA lesion, or poly(ADP-ribose) polymerase 1 (PARP1)-DNA complexes trapped by PARP inhibitors. Required for PCNA loading on replication sites. Promotes S-phase entry and DNA synthesis. Also acts as a restriction factor for some viruses including SV40 polyomavirus and vaccinia virus. Mechanistically, affects nuclear barrier function during viral replication by mediating the disruption of the nuclear pore complex (NPC) via its protease activity. In turn, interacts with vaccinia virus DNA-binding protein OPG079 in the cytoplasm and promotes its degradation without the need of its protease activity but through autophagy. The polypeptide is Serine protease FAM111A (Homo sapiens (Human)).